The following is a 468-amino-acid chain: ATP synthase subunit beta (468 aa).

ATP is bound at residue 155 to 162 (GGAGVGKT).

It belongs to the ATPase alpha/beta chains family. In terms of assembly, F-type ATPases have 2 components, CF(1) - the catalytic core - and CF(0) - the membrane proton channel. CF(1) has five subunits: alpha(3), beta(3), gamma(1), delta(1), epsilon(1). CF(0) has three main subunits: a(1), b(2) and c(9-12). The alpha and beta chains form an alternating ring which encloses part of the gamma chain. CF(1) is attached to CF(0) by a central stalk formed by the gamma and epsilon chains, while a peripheral stalk is formed by the delta and b chains.

The protein localises to the cell membrane. The catalysed reaction is ATP + H2O + 4 H(+)(in) = ADP + phosphate + 5 H(+)(out). Functionally, produces ATP from ADP in the presence of a proton gradient across the membrane. The catalytic sites are hosted primarily by the beta subunits. The polypeptide is ATP synthase subunit beta (Streptococcus agalactiae serotype III (strain NEM316)).